Here is a 197-residue protein sequence, read N- to C-terminus: ATP-dependent Clp protease proteolytic subunit 1 (197 aa).

The active-site Nucleophile is the Ser-88. His-113 is an active-site residue.

Belongs to the peptidase S14 family. In terms of assembly, fourteen ClpP subunits assemble into 2 heptameric rings which stack back to back to give a disk-like structure with a central cavity, resembling the structure of eukaryotic proteasomes.

It is found in the cytoplasm. The enzyme catalyses Hydrolysis of proteins to small peptides in the presence of ATP and magnesium. alpha-casein is the usual test substrate. In the absence of ATP, only oligopeptides shorter than five residues are hydrolyzed (such as succinyl-Leu-Tyr-|-NHMec, and Leu-Tyr-Leu-|-Tyr-Trp, in which cleavage of the -Tyr-|-Leu- and -Tyr-|-Trp bonds also occurs).. Cleaves peptides in various proteins in a process that requires ATP hydrolysis. Has a chymotrypsin-like activity. Plays a major role in the degradation of misfolded proteins. The sequence is that of ATP-dependent Clp protease proteolytic subunit 1 from Leifsonia xyli subsp. xyli (strain CTCB07).